The following is a 901-amino-acid chain: Mediator of RNA polymerase II transcription subunit 14 (901 aa).

It belongs to the Mediator complex subunit 14 family. As to quaternary structure, component of the Mediator complex.

Its subcellular location is the nucleus. Component of the Mediator complex, a coactivator involved in the regulated transcription of nearly all RNA polymerase II-dependent genes. Mediator functions as a bridge to convey information from gene-specific regulatory proteins to the basal RNA polymerase II transcription machinery. Mediator is recruited to promoters by direct interactions with regulatory proteins and serves as a scaffold for the assembly of a functional preinitiation complex with RNA polymerase II and the general transcription factors. This chain is Mediator of RNA polymerase II transcription subunit 14 (RGR1), found in Yarrowia lipolytica (strain CLIB 122 / E 150) (Yeast).